A 264-amino-acid chain; its full sequence is Granzyme K (264 aa).

The signal sequence occupies residues 1–24; it reads MTKFSSFSLFFLIVGAYMTHVCFN. The propeptide at 25–26 is activation peptide; it reads ME. Residues 27-259 form the Peptidase S1 domain; that stretch reads IIGGKEVSPH…YQTWIKSNLV (233 aa). A disulfide bond links Cys-52 and Cys-68. Residues His-67 and Asp-116 each act as charge relay system in the active site. 3 cysteine pairs are disulfide-bonded: Cys-149-Cys-220, Cys-181-Cys-199, and Cys-210-Cys-234. Ser-214 functions as the Charge relay system in the catalytic mechanism.

This sequence belongs to the peptidase S1 family. Granzyme subfamily. Expressed in lung, spleen, thymus and peripheral blood leukocytes.

The protein resides in the secreted. It localises to the cytoplasmic granule. This chain is Granzyme K (GZMK), found in Homo sapiens (Human).